The following is a 264-amino-acid chain: Eukaryotic translation initiation factor 6 (264 aa).

Belongs to the eIF-6 family. As to quaternary structure, monomer. Associates with the 60S ribosomal subunit.

The protein resides in the cytoplasm. It localises to the nucleus. It is found in the nucleolus. Its function is as follows. Binds to the 60S ribosomal subunit and prevents its association with the 40S ribosomal subunit to form the 80S initiation complex in the cytoplasm. May also be involved in ribosome biogenesis. This chain is Eukaryotic translation initiation factor 6, found in Toxoplasma gondii (strain ATCC 50861 / VEG).